A 176-amino-acid polypeptide reads, in one-letter code: Neuroblastoma suppressor of tumorigenicity 1 (176 aa).

An N-terminal signal peptide occupies residues Met-1–Ala-17. Cystine bridges form between Cys-34–Cys-84, Cys-48–Cys-98, Cys-58–Cys-117, Cys-62–Cys-119, and Cys-81–Cys-122. In terms of domain architecture, CTCK spans Cys-34–Gly-123. The disordered stretch occupies residues Glu-148 to Glu-176.

This sequence belongs to the DAN family. Interacts with bmp2; the interaction is blocked in presence of nog.

Its subcellular location is the secreted. Its function is as follows. May act as a tumor suppressor. Cytokine that has an axial patterning activity. Acts like bone morpho-genetic protein (BMP) antagonist in embryonic explants. Blocks the bmp2 activity. The chain is Neuroblastoma suppressor of tumorigenicity 1 (nbl1) from Xenopus tropicalis (Western clawed frog).